The primary structure comprises 263 residues: Small ribosomal subunit protein eS4, Y isoform 2 (263 aa).

The S4 RNA-binding domain maps to 42 to 104 (LPLIVFLRNR…TGEHFRLVYN (63 aa)).

This sequence belongs to the eukaryotic ribosomal protein eS4 family.

The sequence is that of Small ribosomal subunit protein eS4, Y isoform 2 (RPS4Y2) from Homo sapiens (Human).